We begin with the raw amino-acid sequence, 130 residues long: Small ribosomal subunit protein uS11 (130 aa).

It belongs to the universal ribosomal protein uS11 family. As to quaternary structure, part of the 30S ribosomal subunit. Interacts with proteins S7 and S18. Binds to IF-3.

Located on the platform of the 30S subunit, it bridges several disparate RNA helices of the 16S rRNA. Forms part of the Shine-Dalgarno cleft in the 70S ribosome. This Helicobacter hepaticus (strain ATCC 51449 / 3B1) protein is Small ribosomal subunit protein uS11.